The primary structure comprises 294 residues: Putative ribose uptake protein RbsU (294 aa).

10 helical membrane passes run 5 to 24 (ALLI…TIAS), 34 to 56 (ILGS…GIAF), 61 to 80 (NLWF…IVTF), 90 to 112 (RAMP…FALG), 121 to 138 (VLGG…WLTV), 153 to 170 (QAVI…AYSA), 182 to 204 (AFVP…LASR), 214 to 236 (VSYT…LISA), 243 to 265 (LATG…IWFL), and 275 to 292 (WVTI…AVTV).

It belongs to the GRP transporter (TC 2.A.7.5) family.

The protein resides in the cell membrane. Functionally, could be involved in the uptake of ribose. The sequence is that of Putative ribose uptake protein RbsU (rbsU) from Lactiplantibacillus plantarum (strain ATCC BAA-793 / NCIMB 8826 / WCFS1) (Lactobacillus plantarum).